The sequence spans 411 residues: Carbohydrate sulfotransferase 1 (411 aa).

Topologically, residues 1–2 (MQ) are cytoplasmic. A helical; Signal-anchor for type II membrane protein transmembrane segment spans residues 3-23 (CSWKAVLLLALASIAIQYTAI). Topologically, residues 24-411 (RTFTAKSFHT…VEERDFRPFL (388 aa)) are lumenal. A glycan (N-linked (GlcNAc...) asparagine) is linked at Asn-56. Residue 69–75 (TRSGSSF) participates in 3'-phosphoadenylyl sulfate binding. N-linked (GlcNAc...) asparagine glycans are attached at residues Asn-145 and Asn-189. Residue 234–242 (RDPRGILAS) participates in 3'-phosphoadenylyl sulfate binding. Asn-334 is a glycosylation site (N-linked (GlcNAc...) asparagine). The Cell attachment site signature appears at 337–339 (RGD).

This sequence belongs to the sulfotransferase 1 family. Gal/GlcNAc/GalNAc subfamily. As to expression, broadly expressed with highest levels in central nervous system. Expressed in cortex (at protein level). Expressed in high endothelial venules in peripheral lymph nodes, mesenteric lymph nodes and Peyer's patches.

The protein localises to the golgi apparatus membrane. It catalyses the reaction 3'-phosphoadenylyl sulfate + keratan = adenosine 3',5'-bisphosphate + keratan 6'-sulfate.. It functions in the pathway glycan metabolism. Functionally, sulfotransferase that utilizes 3'-phospho-5'-adenylyl sulfate (PAPS) as sulfonate donor to catalyze the transfer of sulfate to position 6 of internal galactose (Gal) residues of keratan. Cooperates with B4GALT4 and B3GNT7 glycosyltransferases and CHST6 sulfotransferase to construct and elongate disulfated disaccharide unit [-&gt;3(6-sulfoGalbeta)1-&gt;4(6-sulfoGlcNAcbeta)1-&gt;] within keratan sulfate polymer. Has a preference for sulfating keratan sulfate, but it also transfers sulfate to the unsulfated polymer. Involved in biosynthesis of phosphacan, a major keratan sulfate proteoglycan in the developing brain. Involved in biosynthesis of 6-sulfoGalbeta-containing O-linked glycans in high endothelial venules of lymph nodes. May act in a synergistic manner with CHST4 to generate sialyl 6',6-disulfo Lewis X motif, a recognition determinant for immune cell receptors implicated in leukocyte trafficking. Catalyzes sulfation of N-acetyllactosamine (LacNAc) oligosaccharides with highest efficiency for sialylated LacNAc structures. In Mus musculus (Mouse), this protein is Carbohydrate sulfotransferase 1 (Chst1).